Consider the following 429-residue polypeptide: Glutamate-1-semialdehyde 2,1-aminomutase (429 aa).

Position 268 is an N6-(pyridoxal phosphate)lysine (K268).

This sequence belongs to the class-III pyridoxal-phosphate-dependent aminotransferase family. HemL subfamily. As to quaternary structure, homodimer. It depends on pyridoxal 5'-phosphate as a cofactor.

It localises to the cytoplasm. It catalyses the reaction (S)-4-amino-5-oxopentanoate = 5-aminolevulinate. Its pathway is porphyrin-containing compound metabolism; protoporphyrin-IX biosynthesis; 5-aminolevulinate from L-glutamyl-tRNA(Glu): step 2/2. The sequence is that of Glutamate-1-semialdehyde 2,1-aminomutase from Serratia proteamaculans (strain 568).